The primary structure comprises 152 residues: RxLR effector protein Avrblb1 (152 aa).

Residues 1-24 (MRSLLLTVLLNLVVLLATTGAVSS) form the signal peptide. The RxLR-dEER motif lies at 51 to 72 (RSLRGDYNNEVTKEPNTSDEER). The RGD RLK-binding motif motif lies at 54-56 (RGD). N-linked (GlcNAc...) asparagine glycosylation is present at Asn66. The tract at residues 99–152 (QSKTVLRYEDKLFTALYKSGETPRSLRTKHLDKASASVFFNRFKKWYDKNVGPS) is w motif.

It belongs to the RxLR effector family. As to quaternary structure, interacts with host defense protein RGA2/Rpi-blb1. Interacts with host legume-type lectin receptor kinase LECRK19.

The protein resides in the secreted. Its subcellular location is the host nucleus. It localises to the host nucleolus. It is found in the host cell membrane. Functionally, secreted effector that acts as an elicitor of hypersensitive response (HR) specifically on plants carrying defense protein RGA2/Rpi-blb1. Enhances P.infestans colonization of plant hosts Nicotiana benthamiana and potato Solanum bulbocastanum leaves. Associates with host legume-type lectin receptor kinases and disrupts attachments between the host plasma membrane and cell wall. In Phytophthora infestans (strain T30-4) (Potato late blight agent), this protein is RxLR effector protein Avrblb1.